The sequence spans 384 residues: Cytochrome b (384 aa).

The next 4 helical transmembrane spans lie at 32 to 52, 76 to 98, 113 to 133, and 179 to 199; these read VGSL…FLAM, WLIR…LHIG, LWVI…MGYC, and FFAL…MHLM. Heme b contacts are provided by H82 and H96. The heme b site is built by H183 and H197. Residue H202 coordinates a ubiquinone. The next 4 membrane-spanning stretches (helical) occupy residues 225-245, 289-309, 321-341, and 348-368; these read FIFK…LFVF, LGGV…PYTD, LSKF…NLGQ, and YIEL…LIVP.

The protein belongs to the cytochrome b family. As to quaternary structure, fungal cytochrome b-c1 complex contains 10 subunits; 3 respiratory subunits, 2 core proteins and 5 low-molecular weight proteins. Cytochrome b-c1 complex is a homodimer. Requires heme b as cofactor.

The protein resides in the mitochondrion inner membrane. Functionally, component of the ubiquinol-cytochrome c reductase complex (complex III or cytochrome b-c1 complex) that is part of the mitochondrial respiratory chain. The b-c1 complex mediates electron transfer from ubiquinol to cytochrome c. Contributes to the generation of a proton gradient across the mitochondrial membrane that is then used for ATP synthesis. The polypeptide is Cytochrome b (COB) (Candida parapsilosis (Yeast)).